Here is a 204-residue protein sequence, read N- to C-terminus: E2 ubiquitin-conjugating enzyme PEX4 (204 aa).

The region spanning S2–I196 is the UBC core domain. C133 (glycyl thioester intermediate) is an active-site residue.

It belongs to the ubiquitin-conjugating enzyme family.

Its subcellular location is the peroxisome membrane. It carries out the reaction S-ubiquitinyl-[E1 ubiquitin-activating enzyme]-L-cysteine + [E2 ubiquitin-conjugating enzyme]-L-cysteine = [E1 ubiquitin-activating enzyme]-L-cysteine + S-ubiquitinyl-[E2 ubiquitin-conjugating enzyme]-L-cysteine.. The protein operates within protein modification; protein ubiquitination. Its function is as follows. E2 ubiquitin-conjugating enzyme involved in peroxisome biosynthesis. Acts late in peroxisomal matrix protein import, after matrix protein translocation. Required for both monoubiquitination and polyubiquitination of coreceptor PEX20. polyubiquitination of PEX20 at conserved lysine 'Lys-19' near the N-terminus leads to its and proteasomal degradation, whereas a monoubiquitination at the conserved cysteine 'Cys-8' is essential for its recycling. The polypeptide is E2 ubiquitin-conjugating enzyme PEX4 (Komagataella phaffii (strain GS115 / ATCC 20864) (Yeast)).